A 547-amino-acid polypeptide reads, in one-letter code: Solute carrier family 22 member 25 (547 aa).

Topologically, residues 1-9 are cytoplasmic; that stretch reads MAFQDLLDQ. A helical membrane pass occupies residues 10 to 30; it reads VGGLGRFQILQMVFLIMFNVI. At 31–145 the chain is on the extracellular side; it reads VYHQTQLENF…DLVCESQPLN (115 aa). Residues Asn-56 and Asn-102 are each glycosylated (N-linked (GlcNAc...) asparagine). A helical transmembrane segment spans residues 146-166; that stretch reads SVAKFLFMAGMMVGGNLYGHL. At 167 to 177 the chain is on the cytoplasmic side; sequence SDRFGRKFVLR. The chain crosses the membrane as a helical span at residues 178–198; it reads WSYLQLAIVGTCAAFAPTILV. Over 199-204 the chain is Extracellular; sequence YCSLRF. A helical transmembrane segment spans residues 205-225; it reads LAGAATFSIIVNTVLLIVEWI. The Cytoplasmic segment spans residues 226–234; the sequence is THQFCAMAL. A helical transmembrane segment spans residues 235–255; sequence TLTLCAASIGHITLGSLAFVI. Over 256–259 the chain is Extracellular; the sequence is RDQC. The chain crosses the membrane as a helical span at residues 260-280; the sequence is ILQLVMSAPCFVFFLFSRWLA. Over 281 to 349 the chain is Cytoplasmic; sequence ESARWLIINN…LLRIPNICKR (69 aa). A helical transmembrane segment spans residues 350-370; the sequence is ICFLSFVRFASTIPFWGLTLH. The Extracellular segment spans residues 371-377; sequence LQHLGNN. Residues 378 to 398 traverse the membrane as a helical segment; sequence VFLLQTLFGAVTLLANCVAPW. Residues 399 to 406 lie on the Cytoplasmic side of the membrane; it reads ALNHMSRR. A helical membrane pass occupies residues 407 to 427; the sequence is LSQMLLMFLLATCLLAIIFVP. The Extracellular segment spans residues 428–434; the sequence is QEMQTLR. A helical transmembrane segment spans residues 435 to 455; it reads VVLATLGVGAASLGITCSTAQ. Over 456 to 470 the chain is Cytoplasmic; it reads ENELIPSIIRGRATG. The chain crosses the membrane as a helical span at residues 471 to 491; the sequence is ITGNFANIGGALASLMMILSI. The Extracellular segment spans residues 492 to 494; sequence YSR. The chain crosses the membrane as a helical span at residues 495 to 515; it reads PLPWIIYGVFAILSGLVVLLL. At 516–547 the chain is on the cytoplasmic side; the sequence is PETRNQPLLDSIQDVENEGVNSLAAPQRSSVL.

This sequence belongs to the major facilitator (TC 2.A.1) superfamily. Organic cation transporter (TC 2.A.1.19) family. As to expression, expressed exclusively in liver in both embryo and adult.

Its subcellular location is the membrane. This chain is Solute carrier family 22 member 25, found in Homo sapiens (Human).